A 261-amino-acid chain; its full sequence is Putative [LysW]-aminoadipate/[LysW]-glutamate kinase (261 aa).

Substrate-binding positions include 35 to 36 (GG), Arg-62, and Asn-162.

Belongs to the acetylglutamate kinase family. LysZ subfamily.

The protein localises to the cytoplasm. It carries out the reaction [amino-group carrier protein]-C-terminal-N-(1,4-dicarboxybutan-1-yl)-L-glutamine + ATP = [amino-group carrier protein]-C-terminal-N-(1-carboxy-5-phosphooxy-5-oxopentan-1-yl)-L-glutamine + ADP. The catalysed reaction is [amino-group carrier protein]-C-terminal-gamma-(L-glutamyl)-L-glutamate + ATP = [amino-group carrier protein]-C-terminal-gamma-(5-phospho-L-glutamyl)-L-glutamate + ADP. It participates in amino-acid biosynthesis; L-lysine biosynthesis via AAA pathway; L-lysine from L-alpha-aminoadipate (Thermus route): step 2/5. Its pathway is amino-acid biosynthesis; L-arginine biosynthesis. In terms of biological role, involved in both the arginine and lysine biosynthetic pathways. Phosphorylates the LysW-bound precursors glutamate (for arginine biosynthesis), respectively alpha-aminoadipate (for lysine biosynthesis). The chain is Putative [LysW]-aminoadipate/[LysW]-glutamate kinase from Pyrobaculum calidifontis (strain DSM 21063 / JCM 11548 / VA1).